A 184-amino-acid polypeptide reads, in one-letter code: Photosystem I assembly protein Ycf4 (184 aa).

Helical transmembrane passes span 21–43 and 63–85; these read NYFWATVVFLGSLGFFIVGVSSY and GIVMCFYGIAGLFLSFYLWFTIF.

It belongs to the Ycf4 family.

It localises to the plastid. Its subcellular location is the chloroplast thylakoid membrane. In terms of biological role, seems to be required for the assembly of the photosystem I complex. The sequence is that of Photosystem I assembly protein Ycf4 from Chaetosphaeridium globosum (Charophycean green alga).